An 84-amino-acid chain; its full sequence is Dolichol phosphate-mannose biosynthesis regulatory protein (84 aa).

A run of 2 helical transmembrane segments spans residues 11 to 31 (FGLV…VILL) and 49 to 69 (YAVL…GLFI).

The protein belongs to the DPM2 family. In terms of assembly, component of the dolichol-phosphate mannose (DPM) synthase complex composed of DPM1, DPM2 and DPM3; in the complex interacts directly with DPM3. Component of the glycosylphosphatidylinositol-N-acetylglucosaminyltransferase (GPI-GnT) complex composed at least by PIGA, PIGC, PIGH, PIGP, PIGQ, PIGY and DPM2. Interacts with PIGA, PIGC and PIGQ.

The protein resides in the endoplasmic reticulum membrane. The protein operates within protein modification; protein glycosylation. Regulates the biosynthesis of dolichol phosphate-mannose. Regulatory subunit of the dolichol-phosphate mannose (DPM) synthase complex; essential for the ER localization and stable expression of DPM1. Part of the glycosylphosphatidylinositol-N-acetylglucosaminyltransferase (GPI-GnT) complex that catalyzes the transfer of N-acetylglucosamine from UDP-N-acetylglucosamine to phosphatidylinositol and participates in the first step of GPI biosynthesis. May act by regulating the GPI-GNT complex. This chain is Dolichol phosphate-mannose biosynthesis regulatory protein, found in Mus musculus (Mouse).